The sequence spans 235 residues: H2HPP isomerase (235 aa).

Cupin type-2 domains are found at residues 41-106 (VPPH…AIDI) and 151-216 (KIPG…KSIN). Positions 50, 52, 56, 91, 162, 164, 168, and 202 each coordinate a divalent metal cation. Tyr-223 contributes to the substrate binding site.

As to quaternary structure, monomer. It depends on Fe(2+) as a cofactor. Co(2+) is required as a cofactor.

It is found in the cytoplasm. The enzyme catalyses 3-[(4R)-4-hydroxycyclohexa-1,5-dien-1-yl]-2-oxopropanoate = 3-[(1E,4R)-4-hydroxycyclohex-2-en-1-ylidene]pyruvate. It functions in the pathway antibiotic biosynthesis; bacilysin biosynthesis. Functionally, part of the bacABCDEF operon responsible for the biosynthesis of the nonribosomally synthesized dipeptide antibiotic bacilysin, composed of L-alanine and L-anticapsin. Bacilysin is an irreversible inactivator of the glutaminase domain of glucosamine synthetase. BacB catalyzes the allylic isomerization of the endocyclic-delta(4),delta(8)-7R-dihydro-hydroxyphenylpyruvate (en-H2HPP) to generate a mixture of 3E,7R- and 3Z, 7R-olefins (E/Z ration of 3/1) of the exocyclic-delta(3),delta(5)-dihydro-hydroxyphenylpyruvate (ex-H2HPP). This chain is H2HPP isomerase, found in Bacillus subtilis (strain 168).